A 512-amino-acid chain; its full sequence is Histidine ammonia-lyase (512 aa).

The 5-imidazolinone (Ala-Gly) cross-link spans 142-144 (ASG). 2,3-didehydroalanine (Ser) is present on S143.

This sequence belongs to the PAL/histidase family. Post-translationally, contains an active site 4-methylidene-imidazol-5-one (MIO), which is formed autocatalytically by cyclization and dehydration of residues Ala-Ser-Gly.

It is found in the cytoplasm. It catalyses the reaction L-histidine = trans-urocanate + NH4(+). The protein operates within amino-acid degradation; L-histidine degradation into L-glutamate; N-formimidoyl-L-glutamate from L-histidine: step 1/3. The polypeptide is Histidine ammonia-lyase (Bartonella tribocorum (strain CIP 105476 / IBS 506)).